The sequence spans 721 residues: Leucine-rich repeat flightless-interacting protein 2 (721 aa).

The DVL3-binding stretch occupies residues Met1–Glu370. Residue Ser18 is modified to Phosphoserine. A coiled-coil region spans residues Glu22–Arg49. Gly96, Leu101, Tyr168, Ser173, Ser190, and Ser202 each carry phosphoserine. Disordered regions lie at residues Ser232–Val262 and Lys295–Asp338. Composition is skewed to polar residues over residues Pro237–Asp251 and Thr305–Asp338. A phosphoserine mark is found at Ser309, Ser312, Ser320, Ser324, and Ser328. Phosphothreonine is present on Thr331. Phosphoserine occurs at positions 332 and 333. Coiled coils occupy residues Asp349–His524 and Leu566–Arg714.

This sequence belongs to the LRRFIP family. As to quaternary structure, interacts (via N-terminus) with DVL3. Interacts with FLII. Weakly interacts with MYD88 in resting cells. Following LPS-stimulation, the interaction with MYD88 is rapidly enhanced; the complex gradually dissociates to basal levels after 6 hours of stimulation. Interaction with MYD88 is regulated by LPS-induced phosphorylation at Ser-202. In the presence of LPS, competes with FLII for MYD88-binding. Post-translationally, ser-190 and Ser-202 are phosphorylated in response to LPS stimulation. Ser-202 phosphorylation regulates the LPS-induced interaction with MYD88. In terms of tissue distribution, widely expressed, with highest levels in heart and skeletal muscle.

Its function is as follows. May function as activator of the canonical Wnt signaling pathway, in association with DVL3, upstream of CTNNB1/beta-catenin. Positively regulates Toll-like receptor (TLR) signaling in response to agonist probably by competing with the negative FLII regulator for MYD88-binding. In Homo sapiens (Human), this protein is Leucine-rich repeat flightless-interacting protein 2 (LRRFIP2).